The primary structure comprises 371 residues: Beta-1,3-galactosyltransferase 4 (371 aa).

The Cytoplasmic segment spans residues 1 to 4; that stretch reads MPLS. The helical; Signal-anchor for type II membrane protein transmembrane segment at 5–25 threads the bilayer; that stretch reads LFRRVLLAVLLLVIIWTLFGP. The Lumenal portion of the chain corresponds to 26 to 371; it reads SGLGEELLSL…RCRFIAWFSS (346 aa). N-linked (GlcNAc...) asparagine glycosylation is present at Asn143.

It belongs to the glycosyltransferase 31 family. Expressed in heart, brain, spleen, kidney, lung and testis.

It is found in the golgi apparatus membrane. The catalysed reaction is a ganglioside GM2 (d18:1(4E)) + UDP-alpha-D-galactose = a ganglioside GM1 (d18:1(4E)) + UDP + H(+). It catalyses the reaction a ganglioside GM2 + UDP-alpha-D-galactose = a ganglioside GM1 + UDP + H(+). The enzyme catalyses a ganglioside GD2 (d18:1(4E)) + UDP-alpha-D-galactose = a ganglioside GD1b (d18:1(4E)) + UDP + H(+). It carries out the reaction a ganglioside GA2 (d18:1(4E)) + UDP-alpha-D-galactose = a ganglioside GA1 (d18:1(4E)) + UDP + H(+). It functions in the pathway protein modification; protein glycosylation. Its function is as follows. Involved in GM1/GD1B/GA1 ganglioside biosynthesis. The polypeptide is Beta-1,3-galactosyltransferase 4 (Mus musculus (Mouse)).